A 190-amino-acid polypeptide reads, in one-letter code: Outer-membrane lipoprotein LolB (190 aa).

A signal peptide spans 1–16; sequence MRLRFSLLLTVSLLAG. A lipid anchor (N-palmitoyl cysteine) is attached at cysteine 17. Cysteine 17 is lipidated: S-diacylglycerol cysteine.

The protein belongs to the LolB family. In terms of assembly, monomer.

Its subcellular location is the cell outer membrane. Its function is as follows. Plays a critical role in the incorporation of lipoproteins in the outer membrane after they are released by the LolA protein. The chain is Outer-membrane lipoprotein LolB from Dechloromonas aromatica (strain RCB).